The primary structure comprises 207 residues: FMN-dependent NADH:quinone oxidoreductase 1 (207 aa).

FMN-binding positions include Ser-9, Ser-15–Ser-17, and Thr-139–Gly-142.

The protein belongs to the azoreductase type 1 family. In terms of assembly, homodimer. The cofactor is FMN.

It catalyses the reaction 2 a quinone + NADH + H(+) = 2 a 1,4-benzosemiquinone + NAD(+). It carries out the reaction N,N-dimethyl-1,4-phenylenediamine + anthranilate + 2 NAD(+) = 2-(4-dimethylaminophenyl)diazenylbenzoate + 2 NADH + 2 H(+). Functionally, quinone reductase that provides resistance to thiol-specific stress caused by electrophilic quinones. In terms of biological role, also exhibits azoreductase activity. Catalyzes the reductive cleavage of the azo bond in aromatic azo compounds to the corresponding amines. This Trichormus variabilis (strain ATCC 29413 / PCC 7937) (Anabaena variabilis) protein is FMN-dependent NADH:quinone oxidoreductase 1.